The sequence spans 1349 residues: Patatin-like phospholipase domain-containing protein 7 (1349 aa).

Topologically, residues 1–36 are lumenal; sequence MQKEEDVCPEAGYCLGTALSSWGLHFMEEHSQSTML. The chain crosses the membrane as a helical span at residues 37–57; sequence MGIGIGVLLTLAFVGLAAFFV. Topologically, residues 58-1349 are cytoplasmic; it reads YRKVSRFRRA…DQGPRLYRPS (1292 aa). 170–297 serves as a coordination point for a nucleoside 3',5'-cyclic phosphate; the sequence is VLGHFEKPLF…VRVVQIIMVR (128 aa). A disordered region spans residues 340 to 361; that stretch reads MSYGPEEQLERSPRLSEFNSSD. 2 positions are modified to phosphoserine: serine 341 and serine 377. A nucleoside 3',5'-cyclic phosphate is bound by residues 496–599 and 610–715; these read FLHV…VVRR and ALDW…LGEK. An involved in the binding to lipid droplets region spans residues 678-964; it reads VHAVRDSELA…RGCAQVGILR (287 aa). One can recognise a PNPLA domain in the interval 947–1113; that stretch reads LVLGGGGARG…INNLPADVAR (167 aa). The GXGXXG motif lies at 951–956; that stretch reads GGGARG. The GXSXG signature appears at 978 to 982; sequence GTSIG. Serine 980 (nucleophile) is an active-site residue. Aspartate 1100 functions as the Proton acceptor in the catalytic mechanism. Positions 1100-1102 match the DGA/G motif; the sequence is DGG. Serine 1277 is modified (phosphoserine). Threonine 1281 is subject to Phosphothreonine. Residues 1297–1349 are disordered; sequence DFQSTGIELDSDSECEPSMSQGPHSLTSPKQSQDSFPWLPNQDDQGPRLYRPS. Over residues 1314 to 1331 the composition is skewed to polar residues; it reads SMSQGPHSLTSPKQSQDS.

The protein belongs to the NTE family. In terms of tissue distribution, expressed in the brain, liver, kidney, lung and testis.

Its subcellular location is the endoplasmic reticulum membrane. The protein localises to the lipid droplet. It carries out the reaction a 1-acyl-sn-glycero-3-phosphocholine + H2O = sn-glycerol 3-phosphocholine + a fatty acid + H(+). The enzyme catalyses 1-(9Z-octadecenoyl)-sn-glycero-3-phosphocholine + H2O = sn-glycerol 3-phosphocholine + (9Z)-octadecenoate + H(+). It catalyses the reaction 1-(9Z-octadecenoyl)-sn-glycero-3-phosphoethanolamine + H2O = sn-glycero-3-phosphoethanolamine + (9Z)-octadecenoate + H(+). The catalysed reaction is 1-(9Z-octadecenoyl)-sn-glycero-3-phospho-L-serine + H2O = sn-glycero-3-phospho-L-serine + (9Z)-octadecenoate + H(+). It carries out the reaction 1-hexadecanoyl-sn-glycero-3-phosphocholine + H2O = sn-glycerol 3-phosphocholine + hexadecanoate + H(+). The enzyme catalyses 1-hexadecanoyl-sn-glycero-3-phosphate + H2O = sn-glycerol 3-phosphate + hexadecanoate + H(+). Its function is as follows. Lysophospholipase which preferentially deacylates unsaturated lysophosphatidylcholine (C18:1), generating glycerophosphocholine. Also can deacylate, to a lesser extent, lysophosphatidylethanolamine (C18:1), lysophosphatidyl-L-serine (C18:1) and lysophosphatidic acid (C16:0). This chain is Patatin-like phospholipase domain-containing protein 7 (Pnpla7), found in Rattus norvegicus (Rat).